A 38-amino-acid chain; its full sequence is Large ribosomal subunit protein bL36 (38 aa).

The protein belongs to the bacterial ribosomal protein bL36 family.

This Chlorobium limicola (strain DSM 245 / NBRC 103803 / 6330) protein is Large ribosomal subunit protein bL36.